Consider the following 105-residue polypeptide: UPF0166 protein aq_450 (105 aa).

The protein belongs to the UPF0166 family.

The polypeptide is UPF0166 protein aq_450 (Aquifex aeolicus (strain VF5)).